The primary structure comprises 600 residues: Elongation factor 4 (600 aa).

The region spanning 5–187 (KYIRNFSIIA…AIINKLPSPK (183 aa)) is the tr-type G domain. Residues 17–22 (DHGKST) and 134–137 (NKID) each bind GTP.

This sequence belongs to the TRAFAC class translation factor GTPase superfamily. Classic translation factor GTPase family. LepA subfamily.

It is found in the cell inner membrane. The enzyme catalyses GTP + H2O = GDP + phosphate + H(+). Its function is as follows. Required for accurate and efficient protein synthesis under certain stress conditions. May act as a fidelity factor of the translation reaction, by catalyzing a one-codon backward translocation of tRNAs on improperly translocated ribosomes. Back-translocation proceeds from a post-translocation (POST) complex to a pre-translocation (PRE) complex, thus giving elongation factor G a second chance to translocate the tRNAs correctly. Binds to ribosomes in a GTP-dependent manner. This Rickettsia typhi (strain ATCC VR-144 / Wilmington) protein is Elongation factor 4.